The primary structure comprises 65 residues: Large ribosomal subunit protein bL35 (65 aa).

A disordered region spans residues 1–26; it reads MPKMKSNKGASKRFKKTASGGFKCKQ.

It belongs to the bacterial ribosomal protein bL35 family.

The sequence is that of Large ribosomal subunit protein bL35 from Idiomarina loihiensis (strain ATCC BAA-735 / DSM 15497 / L2-TR).